The chain runs to 192 residues: uncharacterized protein (192 aa).

A helical; Signal-anchor transmembrane segment spans residues 7–29 (FIHSISGGSSLLSASEVFASAFF). The helical transmembrane segment at 51–67 (YFLCVLVSTFLNSLVII) threads the bilayer.

The protein localises to the membrane. This is an uncharacterized protein from Saccharomyces cerevisiae (strain ATCC 204508 / S288c) (Baker's yeast).